The chain runs to 209 residues: Large ribosomal subunit protein uL3 (209 aa).

Residues Thr-133–Pro-152 form a disordered region. Gln-150 carries the N5-methylglutamine modification.

Belongs to the universal ribosomal protein uL3 family. In terms of assembly, part of the 50S ribosomal subunit. Forms a cluster with proteins L14 and L19. In terms of processing, methylated by PrmB.

One of the primary rRNA binding proteins, it binds directly near the 3'-end of the 23S rRNA, where it nucleates assembly of the 50S subunit. This is Large ribosomal subunit protein uL3 from Shigella sonnei (strain Ss046).